Here is a 443-residue protein sequence, read N- to C-terminus: UPF0656 protein C926.02 (443 aa).

It belongs to the UPF0656 family.

The protein resides in the cytoplasm. It localises to the nucleus. This Schizosaccharomyces pombe (strain 972 / ATCC 24843) (Fission yeast) protein is UPF0656 protein C926.02.